A 247-amino-acid chain; its full sequence is Type III pantothenate kinase (247 aa).

7 to 14 (AIGNSRWH) contributes to the ATP binding site. Substrate is bound by residues Tyr-91 and 95-98 (GLDR). Catalysis depends on Asp-97, which acts as the Proton acceptor. Asp-117 is a K(+) binding site. Thr-120 contacts ATP. Thr-172 contributes to the substrate binding site.

Belongs to the type III pantothenate kinase family. Homodimer. NH4(+) serves as cofactor. K(+) is required as a cofactor.

The protein localises to the cytoplasm. The enzyme catalyses (R)-pantothenate + ATP = (R)-4'-phosphopantothenate + ADP + H(+). It participates in cofactor biosynthesis; coenzyme A biosynthesis; CoA from (R)-pantothenate: step 1/5. In terms of biological role, catalyzes the phosphorylation of pantothenate (Pan), the first step in CoA biosynthesis. The protein is Type III pantothenate kinase of Synechococcus elongatus (strain ATCC 33912 / PCC 7942 / FACHB-805) (Anacystis nidulans R2).